The chain runs to 249 residues: Undecaprenyl-diphosphatase (249 aa).

8 helical membrane-spanning segments follow: residues 11–31 (GLTE…TAIF), 35–55 (PDVG…VIFV), 74–94 (ITLS…GIFF), 101–121 (IFSE…FMLL), 135–155 (IPYL…LPGI), 175–195 (AVKY…VLEM), 208–228 (FIVA…MVIA), and 229–249 (GKLK…IFYI).

Belongs to the UppP family.

It is found in the cell membrane. The catalysed reaction is di-trans,octa-cis-undecaprenyl diphosphate + H2O = di-trans,octa-cis-undecaprenyl phosphate + phosphate + H(+). Catalyzes the dephosphorylation of undecaprenyl diphosphate (UPP). The protein is Undecaprenyl-diphosphatase of Methanococcus vannielii (strain ATCC 35089 / DSM 1224 / JCM 13029 / OCM 148 / SB).